The sequence spans 361 residues: Septin-12 (361 aa).

The Septin-type G domain maps to 45–316; sequence MGFEFNIMVV…ENYRIIRLKE (272 aa). The tract at residues 45-318 is interaction with SEPTIN7; it reads MGFEFNIMVV…YRIIRLKESH (274 aa). Residues 55–62 are G1 motif; sequence GQSGLGKS. Residues 55–62, T88, G114, 194–202, G250, and R265 each bind GTP; these read GQSGLGKS and RADSLTIEE. Residues 111–114 are G3 motif; it reads DTPG. Residues 193–196 are G4 motif; sequence ARAD. Residues 257-361 are self-association (via N-terminus) to polymerize octameric septin 12-7-6-2/4-2/4-6-7-12 filaments; it reads VNGRCVLGRK…WAEDNSDEDF (105 aa). The segment at 333 to 361 is disordered; that stretch reads PPPAPTGTRASPGPAKMCRWAEDNSDEDF. Residues 338–347 are compositionally biased toward low complexity; that stretch reads TGTRASPGPA.

This sequence belongs to the TRAFAC class TrmE-Era-EngA-EngB-Septin-like GTPase superfamily. Septin GTPase family. In terms of assembly, septins polymerize into heterooligomeric protein complexes that form filaments, and can associate with cellular membranes, actin filaments and microtubules. GTPase activity is required for filament formation. Interacts with SEPTIN6 and SEPTIN11. Component of a octameric complex consisting of SEPTIN12, SEPTIN7, SEPTIN6 and SEPTIN2 or SEPTIN4 in the order 12-7-6-2-2-6-7-12 or 12-7-6-4-4-6-7-12 and located in the sperm annulus; the octamer polymerizes into filaments via the SEPTIN12 N- and C-termini; the SEPTIN12:SEPTIN7 association is mediated by the GTP-binding domains. Interacts with SPAG4 and LMNB1. Associates with alpha- and beta-tubulins.

It is found in the cytoplasm. The protein localises to the cytoskeleton. The protein resides in the spindle. It localises to the cell projection. Its subcellular location is the cilium. It is found in the flagellum. Functionally, filament-forming cytoskeletal GTPase. May play a role in cytokinesis (Potential). Involved in spermatogenesis. Involved in the morphogenesis of sperm heads and the elongation of sperm tails probably implicating the association with alpha- and beta-tubulins. Forms a filamentous structure with SEPTIN7, SEPTIN6, SEPTIN2 and probably SEPTIN4 at the sperm annulus which is required for the structural integrity and motility of the sperm tail during postmeiotic differentiation. The protein is Septin-12 of Bos taurus (Bovine).